A 1363-amino-acid polypeptide reads, in one-letter code: DNA-directed RNA polymerase subunit beta (1363 aa).

The protein belongs to the RNA polymerase beta chain family. As to quaternary structure, the RNAP catalytic core consists of 2 alpha, 1 beta, 1 beta' and 1 omega subunit. When a sigma factor is associated with the core the holoenzyme is formed, which can initiate transcription.

The catalysed reaction is RNA(n) + a ribonucleoside 5'-triphosphate = RNA(n+1) + diphosphate. DNA-dependent RNA polymerase catalyzes the transcription of DNA into RNA using the four ribonucleoside triphosphates as substrates. The sequence is that of DNA-directed RNA polymerase subunit beta from Syntrophus aciditrophicus (strain SB).